A 446-amino-acid polypeptide reads, in one-letter code: uncharacterized protein (446 aa).

Disordered stretches follow at residues 198 to 233, 309 to 337, and 394 to 431; these read SIQK…ENYS, NEDN…DDSK, and SESV…FGNT. Residues 199 to 224 show a composition bias toward low complexity; sequence IQKQIPKQTQEQTQKQTQEQTQESSQ. Residues 317 to 333 are compositionally biased toward acidic residues; sequence DNEEDSDESDIESDSDL. Residues 397–418 show a composition bias toward basic and acidic residues; sequence VKSDSNESKSIKPESIKSESIK.

This is an uncharacterized protein from Acanthamoeba polyphaga mimivirus (APMV).